Consider the following 48-residue polypeptide: MARYRCCRSRSRCRRRRRRCYRRRRRCCRRRRRRVCCRRYTVIRCRRR.

This sequence belongs to the protamine P1 family. In terms of tissue distribution, testis.

The protein localises to the nucleus. It localises to the chromosome. Functionally, protamines substitute for histones in the chromatin of sperm during the haploid phase of spermatogenesis. They compact sperm DNA into a highly condensed, stable and inactive complex. The polypeptide is Sperm protamine P1 (PRM1) (Eptesicus fuscus (Big brown bat)).